Here is a 282-residue protein sequence, read N- to C-terminus: MTTTSAPARNGTRRPSRPIVLLIPVPGSSVIHDLWAGTKLLVVFGISVLLTFYPGWVTIGMMAALVLAAARIAHIPRGALPSVPRWLWIVLAIGFLTAALAGGTPVVAVGGVQLGLGGALHFLRITALSVVLLALGAMVSWTTNVAEISPAVATLGRPFRVLRIPVDEWAVALALALRAFPMLIDEFQVLYAARRLRPKRMPPSRKARRQRHARELIDLLAAAITVTLRRADEMGDAITARGGTGQLSAHPGRPKLADWVTLAITAMASGTAVAIESLILHS.

The next 6 helical transmembrane spans lie at 18 to 38, 40 to 60, 87 to 107, 119 to 139, 164 to 184, and 260 to 280; these read PIVL…WAGT, LLVV…VTIG, LWIV…TPVV, ALHF…GAMV, IPVD…PMLI, and VTLA…SLIL.

This sequence belongs to the CbiQ family.

It localises to the cell membrane. This is an uncharacterized protein from Mycobacterium tuberculosis (strain CDC 1551 / Oshkosh).